The following is a 406-amino-acid chain: 4-hydroxy-3-methylbut-2-en-1-yl diphosphate synthase (ferredoxin) (406 aa).

[4Fe-4S] cluster contacts are provided by Cys-313, Cys-316, Cys-347, and Glu-354.

This sequence belongs to the IspG family. [4Fe-4S] cluster serves as cofactor.

The catalysed reaction is (2E)-4-hydroxy-3-methylbut-2-enyl diphosphate + 2 oxidized [2Fe-2S]-[ferredoxin] + H2O = 2-C-methyl-D-erythritol 2,4-cyclic diphosphate + 2 reduced [2Fe-2S]-[ferredoxin] + H(+). It participates in isoprenoid biosynthesis; isopentenyl diphosphate biosynthesis via DXP pathway; isopentenyl diphosphate from 1-deoxy-D-xylulose 5-phosphate: step 5/6. Functionally, converts 2C-methyl-D-erythritol 2,4-cyclodiphosphate (ME-2,4cPP) into 1-hydroxy-2-methyl-2-(E)-butenyl 4-diphosphate. The sequence is that of 4-hydroxy-3-methylbut-2-en-1-yl diphosphate synthase (ferredoxin) from Picosynechococcus sp. (strain ATCC 27264 / PCC 7002 / PR-6) (Agmenellum quadruplicatum).